Consider the following 602-residue polypeptide: Glutamyl-tRNA(Gln) amidotransferase subunit B, mitochondrial (602 aa).

The N-terminal 52 residues, 1–52 (MLQQWLRQSPAAAGLLRCSRYRGPQAALLQLSPQRAPTYHAIRSLQTSAAES), are a transit peptide targeting the mitochondrion. The interval 61–83 (QLKQGAKGLKAQKRQRRESEEAS) is disordered.

Belongs to the GatB/GatE family. GatB subfamily. Subunit of the heterotrimeric GatCAB amidotransferase (AdT) complex, composed of A, B and C subunits.

The protein resides in the mitochondrion. The enzyme catalyses L-glutamyl-tRNA(Gln) + L-glutamine + ATP + H2O = L-glutaminyl-tRNA(Gln) + L-glutamate + ADP + phosphate + H(+). Allows the formation of correctly charged Gln-tRNA(Gln) through the transamidation of misacylated Glu-tRNA(Gln) in the mitochondria. The reaction takes place in the presence of glutamine and ATP through an activated gamma-phospho-Glu-tRNA(Gln). This chain is Glutamyl-tRNA(Gln) amidotransferase subunit B, mitochondrial, found in Aspergillus clavatus (strain ATCC 1007 / CBS 513.65 / DSM 816 / NCTC 3887 / NRRL 1 / QM 1276 / 107).